The chain runs to 208 residues: Large ribosomal subunit protein uL3 (208 aa).

A disordered region spans residues 117 to 147 (FQGVIKRHGQSRGPMAHGSRYHRRPGSMGPV).

The protein belongs to the universal ribosomal protein uL3 family. In terms of assembly, part of the 50S ribosomal subunit. Forms a cluster with proteins L14 and L19.

In terms of biological role, one of the primary rRNA binding proteins, it binds directly near the 3'-end of the 23S rRNA, where it nucleates assembly of the 50S subunit. The chain is Large ribosomal subunit protein uL3 from Streptococcus equi subsp. zooepidemicus (strain H70).